The following is a 217-amino-acid chain: Uracil-DNA glycosylase (217 aa).

Catalysis depends on aspartate 62, which acts as the Proton acceptor.

Belongs to the uracil-DNA glycosylase (UDG) superfamily. UNG family.

The protein resides in the cytoplasm. It catalyses the reaction Hydrolyzes single-stranded DNA or mismatched double-stranded DNA and polynucleotides, releasing free uracil.. In terms of biological role, excises uracil residues from the DNA which can arise as a result of misincorporation of dUMP residues by DNA polymerase or due to deamination of cytosine. This chain is Uracil-DNA glycosylase, found in Streptococcus equi subsp. zooepidemicus (strain MGCS10565).